A 407-amino-acid polypeptide reads, in one-letter code: Serine/threonine-protein kinase GRIK2 (407 aa).

Residues 21–64 (SGSRNQQSPKPYDDDTHSCDSDVTSTARGEEEEDEEEVEQKSRS) are disordered. Residues 31–40 (PYDDDTHSCD) show a composition bias toward basic and acidic residues. The 264-residue stretch at 107–370 (YVRVCKIGSG…LKNVSEHPWV (264 aa)) folds into the Protein kinase domain. ATP-binding positions include 113 to 121 (IGSGSYGKV) and K136. T153 is modified (phosphothreonine; by autocatalysis). D238 (proton acceptor) is an active-site residue. S260 carries the phosphoserine; by KIN10 modification.

It belongs to the protein kinase superfamily. Ser/Thr protein kinase family. Associates with the SNF1-related protein kinase (SnRK) complex. Interacts with AL1, a geminivirus (TGMV) protein essential for viral replication. Expressed in shoot apical meristem, leaf primordium and emerging petiole (at protein level).

The catalysed reaction is L-seryl-[protein] + ATP = O-phospho-L-seryl-[protein] + ADP + H(+). The enzyme catalyses L-threonyl-[protein] + ATP = O-phospho-L-threonyl-[protein] + ADP + H(+). Activated when autophosphorylated at Thr-153 and inactivated when phosphorylated at Ser-260 by SnRK1.1/KIN10. Functionally, activates SnRK1.1/KIN10 and SnRK1.2/KIN11 by phosphorylation of their activation-loop 'Thr-198' and 'Thr-176', respectively. Required for the regulation by SnRK1 kinases of the transcription of a large set of genes, the modification the activity of metabolic enzymes, and the control of various nutrient-responsive cellular developmental processes. This Arabidopsis thaliana (Mouse-ear cress) protein is Serine/threonine-protein kinase GRIK2 (GRIK2).